The chain runs to 388 residues: Probable serine/threonine-protein kinase PBL20 (388 aa).

Cysteine 3 carries the S-palmitoyl cysteine lipid modification. One can recognise a Protein kinase domain in the interval 91–372; it reads FSRKLKIGEG…FVVESLTNII (282 aa). Residues 97–105 and lysine 128 each bind ATP; that span reads IGEGGFGSV. Residue aspartate 221 is the Proton acceptor of the active site.

This sequence belongs to the protein kinase superfamily. Ser/Thr protein kinase family.

It localises to the cell membrane. The enzyme catalyses L-seryl-[protein] + ATP = O-phospho-L-seryl-[protein] + ADP + H(+). The catalysed reaction is L-threonyl-[protein] + ATP = O-phospho-L-threonyl-[protein] + ADP + H(+). Functionally, may be involved in plant defense signaling. In Arabidopsis thaliana (Mouse-ear cress), this protein is Probable serine/threonine-protein kinase PBL20.